A 1235-amino-acid polypeptide reads, in one-letter code: Myosin-1 (1235 aa).

Residues 1–34 (MGITKRSKDKAARAERSAGGDKSSSAKPKKATFD) form a disordered region. Positions 9 to 19 (DKAARAERSAG) are enriched in basic and acidic residues. Residues 41-715 (IGVSDLTLLS…TLFALEHMRD (675 aa)) form the Myosin motor domain. 134–141 (GESGAGKT) lines the ATP pocket. Residues 405–487 (SIGILDIYGF…PGIFSAMKDA (83 aa)) are actin-binding. 2 IQ domains span residues 719-739 (HNMA…RAEA) and 740-765 (AIRI…EGHK). In terms of domain architecture, TH1 spans 773-962 (RRRMSILGSR…TVHTQPGEPP (190 aa)). Disordered regions lie at residues 949–1076 (YKSS…AAKP) and 1135–1235 (APPV…EDDW). Positions 982-1046 (KGKLIKPGGP…PGAAATPAAA (65 aa)) are enriched in low complexity. The span at 1050-1062 (PSHTRQQSSTSTV) shows a compositional bias: polar residues. Residues 1063–1073 (RPPPPPPPAPA) are compositionally biased toward pro residues. The SH3 domain occupies 1075–1134 (KPKIMAKVLYDFAGTRENELSIKAGDMIEIVQKENNGWWLAKTPEGQAWVPAAYVEEQAP). A compositionally biased stretch (pro residues) spans 1135–1150 (APPVVAPRPPPPPPPA). Residues 1180 to 1210 (SLQNRDSGMSLNGANGSGSDASRSSTPTPSI) are compositionally biased toward polar residues.

This sequence belongs to the TRAFAC class myosin-kinesin ATPase superfamily. Myosin family.

Its subcellular location is the cytoplasm. The protein resides in the cytoskeleton. It localises to the actin patch. Type-I myosin implicated in the organization of the actin cytoskeleton. Required for proper actin cytoskeleton polarization. At the cell cortex, assembles in patch-like structures together with proteins from the actin-polymerizing machinery and promotes actin assembly. Functions as actin nucleation-promoting factor (NPF) for the Arp2/3 complex. The sequence is that of Myosin-1 (myo-1) from Neurospora crassa (strain ATCC 24698 / 74-OR23-1A / CBS 708.71 / DSM 1257 / FGSC 987).